A 161-amino-acid polypeptide reads, in one-letter code: uncharacterized protein (161 aa).

Transmembrane regions (helical) follow at residues 22-42 (LFFI…VFGH), 43-63 (LTVG…ALLV), 89-109 (LAII…AGLG), and 110-130 (VVFG…LPVL). The disordered stretch occupies residues 141–161 (VATYSSNGQTGGSEGRSASDD).

To M.leprae ML1138.

The protein localises to the cell membrane. This is an uncharacterized protein from Mycobacterium bovis (strain ATCC BAA-935 / AF2122/97).